The chain runs to 348 residues: tRNA pseudouridine synthase B (348 aa).

The active-site Nucleophile is Asp52.

It belongs to the pseudouridine synthase TruB family. Type 1 subfamily.

It catalyses the reaction uridine(55) in tRNA = pseudouridine(55) in tRNA. Its function is as follows. Responsible for synthesis of pseudouridine from uracil-55 in the psi GC loop of transfer RNAs. The protein is tRNA pseudouridine synthase B of Rhodopirellula baltica (strain DSM 10527 / NCIMB 13988 / SH1).